Here is a 442-residue protein sequence, read N- to C-terminus: Alpha-1,6-mannosyl-glycoprotein 2-beta-N-acetylglucosaminyltransferase (442 aa).

Residues 1–9 (MRFRIYKRK) lie on the Cytoplasmic side of the membrane. Residues 10–29 (VLILTLVVAACGFVLWSSNG) form a helical; Signal-anchor for type II membrane protein membrane-spanning segment. Over 30–442 (RQRKSDALGP…ELCKSYRRLQ (413 aa)) the chain is Lumenal. Asn-64 and Asn-81 each carry an N-linked (GlcNAc...) asparagine glycan. Substrate-binding positions include 118 to 122 (QVHNR) and Asp-149. Cys-191 and Cys-205 are oxidised to a cystine. 224-228 (QTKHH) lines the substrate pocket. Residue Asp-256 coordinates Mn(2+). Cysteines 278 and 281 form a disulfide. Arg-293 provides a ligand contact to substrate. Cystine bridges form between Cys-329/Cys-352, Cys-334/Cys-435, and Cys-373/Cys-381. Position 369 (His-369) interacts with Mn(2+).

The protein belongs to the glycosyltransferase 16 (GT16) protein family. In terms of assembly, homodimer. Requires Mn(2+) as cofactor. In terms of tissue distribution, detected in liver, lung, testis, kidney, brain, spleen, thymus, uterus and intestine.

Its subcellular location is the golgi apparatus membrane. It catalyses the reaction an N(4)-{beta-D-GlcNAc-(1-&gt;2)-alpha-D-Man-(1-&gt;3)-[alpha-D-Man-(1-&gt;6)]-beta-D-Man-(1-&gt;4)-beta-D-GlcNAc-(1-&gt;4)-beta-D-GlcNAc}-L-asparaginyl-[protein] + UDP-N-acetyl-alpha-D-glucosamine = N(4)-{beta-D-GlcNAc-(1-&gt;2)-alpha-D-Man-(1-&gt;3)-[beta-D-GlcNAc-(1-&gt;2)-alpha-D-Man-(1-&gt;6)]-beta-D-Man-(1-&gt;4)-beta-D-GlcNAc-(1-&gt;4)-beta-D-GlcNAc}-L-asparaginyl-[protein] + UDP + H(+). It participates in protein modification; protein glycosylation. In terms of biological role, plays an essential role in protein N-glycosylation. Catalyzes the transfer of N-acetylglucosamine (GlcNAc) onto the free terminal mannose moiety in the core structure of the nascent N-linked glycan chain, giving rise to the second branch in complex glycans. This Mus musculus (Mouse) protein is Alpha-1,6-mannosyl-glycoprotein 2-beta-N-acetylglucosaminyltransferase (Mgat2).